A 521-amino-acid polypeptide reads, in one-letter code: Probable methylmalonate-semialdehyde/malonate-semialdehyde dehydrogenase [acylating], mitochondrial (521 aa).

The NAD(+) site is built by F172, K196, E199, R200, and S249. C304 serves as the catalytic Nucleophile. E404 is a binding site for NAD(+).

The protein belongs to the aldehyde dehydrogenase family. As to quaternary structure, homotetramer.

The protein resides in the mitochondrion. The catalysed reaction is 2-methyl-3-oxopropanoate + NAD(+) + CoA + H2O = propanoyl-CoA + hydrogencarbonate + NADH + H(+). The enzyme catalyses 3-oxopropanoate + NAD(+) + CoA + H2O = hydrogencarbonate + acetyl-CoA + NADH + H(+). Probable malonate and methylmalonate semialdehyde dehydrogenase involved in the catabolism of valine, thymine, and compounds catabolized by way of beta-alanine, including uracil and cytidine. This is Probable methylmalonate-semialdehyde/malonate-semialdehyde dehydrogenase [acylating], mitochondrial from Aedes aegypti (Yellowfever mosquito).